Here is a 170-residue protein sequence, read N- to C-terminus: MALLPILEFPDPRLRTKAVRVGVAEVVSSSFQTLLDDMFETMYAAPGIGLAATQVNVHQRFMVVDVSEEKNAPMVFINPEIVTREGDQVFQEGCLSVPGIHADVTRALSIVVRFLDRHGDEQQLTAEGLLAVCIQHEMDHLDGKLFIDYLSPLKRDMVRRKLEKQRRRAS.

The Fe cation site is built by C94 and H136. E137 is an active-site residue. H140 lines the Fe cation pocket.

Belongs to the polypeptide deformylase family. It depends on Fe(2+) as a cofactor.

It carries out the reaction N-terminal N-formyl-L-methionyl-[peptide] + H2O = N-terminal L-methionyl-[peptide] + formate. Its function is as follows. Removes the formyl group from the N-terminal Met of newly synthesized proteins. Requires at least a dipeptide for an efficient rate of reaction. N-terminal L-methionine is a prerequisite for activity but the enzyme has broad specificity at other positions. This is Peptide deformylase from Xylella fastidiosa (strain M12).